A 453-amino-acid polypeptide reads, in one-letter code: Phosphatidylserine decarboxylase proenzyme 1, mitochondrial (453 aa).

The N-terminal 29 residues, 1 to 29, are a transit peptide targeting the mitochondrion; that stretch reads MKPRFPQNVYFLARYSYLRRFQHSQRRTF. At 30–74 the chain is on the mitochondrial matrix side; sequence SSFLNNIRSNYSGARASPLGGSSGAGAGAGGGGTGDSKGNAFLVP. A helical transmembrane segment spans residues 75 to 93; the sequence is GATMATILMLGALHARRLY. The Mitochondrial intermembrane portion of the chain corresponds to 94-453; that stretch reads EDKKIEEKRE…GQALGRWKEE (360 aa). Residues D199, H296, and S408 each act as charge relay system; for autoendoproteolytic cleavage activity in the active site. The active-site Schiff-base intermediate with substrate; via pyruvic acid; for decarboxylase activity is S408. S408 bears the Pyruvic acid (Ser); by autocatalysis mark.

It belongs to the phosphatidylserine decarboxylase family. PSD-B subfamily. Eukaryotic type I sub-subfamily. As to quaternary structure, heterodimer of a large membrane-associated beta subunit and a small pyruvoyl-containing alpha subunit. It depends on pyruvate as a cofactor. Is synthesized initially as an inactive proenzyme. Formation of the active enzyme involves a self-maturation process in which the active site pyruvoyl group is generated from an internal serine residue via an autocatalytic post-translational modification. Two non-identical subunits are generated from the proenzyme in this reaction, and the pyruvate is formed at the N-terminus of the alpha chain, which is derived from the carboxyl end of the proenzyme. The autoendoproteolytic cleavage occurs by a canonical serine protease mechanism, in which the side chain hydroxyl group of the serine supplies its oxygen atom to form the C-terminus of the beta chain, while the remainder of the serine residue undergoes an oxidative deamination to produce ammonia and the pyruvoyl prosthetic group on the alpha chain. During this reaction, the Ser that is part of the protease active site of the proenzyme becomes the pyruvoyl prosthetic group, which constitutes an essential element of the active site of the mature decarboxylase. In terms of tissue distribution, expressed in roots, leaves, stems and flowers.

It localises to the mitochondrion. The protein localises to the mitochondrion inner membrane. The enzyme catalyses a 1,2-diacyl-sn-glycero-3-phospho-L-serine + H(+) = a 1,2-diacyl-sn-glycero-3-phosphoethanolamine + CO2. It functions in the pathway phospholipid metabolism; phosphatidylethanolamine biosynthesis; phosphatidylethanolamine from CDP-diacylglycerol: step 2/2. Its function is as follows. Catalyzes the formation of phosphatidylethanolamine (PtdEtn) from phosphatidylserine (PtdSer). Plays a central role in phospholipid metabolism and in the interorganelle trafficking of phosphatidylserine. Contributes only to a minor proportion of PtdEtn production. The chain is Phosphatidylserine decarboxylase proenzyme 1, mitochondrial (PSD1) from Arabidopsis thaliana (Mouse-ear cress).